We begin with the raw amino-acid sequence, 320 residues long: 1,5-anhydro-D-fructose reductase (320 aa).

Residue Asp35 participates in NADP(+) binding. Tyr40 acts as the Proton donor in catalysis. Position 102 (His102) interacts with substrate. NADP(+) contacts are provided by residues Gln194 and 265-277 (IPGS…IKEN).

Belongs to the aldo/keto reductase family. In terms of assembly, monomer. Specifically expressed in testis. Expressed in testicular germ cells and testis interstitial cells.

Its subcellular location is the cytoplasm. The enzyme catalyses 1,5-anhydro-D-glucitol + NADP(+) = 1,5-anhydro-D-fructose + NADPH + H(+). Inhibited by p-chloromercuribenzoic acid and alkyliodines. In terms of biological role, catalyzes the NADPH-dependent reduction of 1,5-anhydro-D-fructose (AF) to 1,5-anhydro-D-glucitol. Has low NADPH-dependent reductase activity towards 9,10-phenanthrenequinone (in vitro). This chain is 1,5-anhydro-D-fructose reductase (AKR1E2), found in Homo sapiens (Human).